Reading from the N-terminus, the 299-residue chain is Ribosomal RNA small subunit methyltransferase A (299 aa).

Residues N44, V46, G71, E92, D122, and N141 each contribute to the S-adenosyl-L-methionine site.

The protein belongs to the class I-like SAM-binding methyltransferase superfamily. rRNA adenine N(6)-methyltransferase family. RsmA subfamily.

The protein resides in the cytoplasm. The catalysed reaction is adenosine(1518)/adenosine(1519) in 16S rRNA + 4 S-adenosyl-L-methionine = N(6)-dimethyladenosine(1518)/N(6)-dimethyladenosine(1519) in 16S rRNA + 4 S-adenosyl-L-homocysteine + 4 H(+). In terms of biological role, specifically dimethylates two adjacent adenosines (A1518 and A1519) in the loop of a conserved hairpin near the 3'-end of 16S rRNA in the 30S particle. May play a critical role in biogenesis of 30S subunits. In Rhodococcus erythropolis (strain PR4 / NBRC 100887), this protein is Ribosomal RNA small subunit methyltransferase A.